The chain runs to 354 residues: Protein Wnt-11 (354 aa).

The N-terminal stretch at methionine 1–glycine 24 is a signal peptide. Asparagine 40 and asparagine 90 each carry an N-linked (GlcNAc...) asparagine glycan. 3 cysteine pairs are disulfide-bonded: cysteine 80-cysteine 91, cysteine 130-cysteine 138, and cysteine 140-cysteine 157. Asparagine 160 is a glycosylation site (N-linked (GlcNAc...) asparagine). 8 cysteine pairs are disulfide-bonded: cysteine 209–cysteine 223, cysteine 211–cysteine 218, cysteine 283–cysteine 314, cysteine 299–cysteine 309, cysteine 313–cysteine 353, cysteine 329–cysteine 344, cysteine 331–cysteine 341, and cysteine 336–cysteine 337. Residue serine 215 is the site of O-palmitoleoyl serine; by PORCN attachment. N-linked (GlcNAc...) asparagine glycans are attached at residues asparagine 300 and asparagine 304.

It belongs to the Wnt family. Post-translationally, palmitoleoylation is required for efficient binding to frizzled receptors. Depalmitoleoylation leads to Wnt signaling pathway inhibition.

The protein localises to the secreted. It is found in the extracellular space. Its subcellular location is the extracellular matrix. Ligand for members of the frizzled family of seven transmembrane receptors. Probable developmental protein. May be a signaling molecule which affects the development of discrete regions of tissues. Is likely to signal over only few cell diameters. This chain is Protein Wnt-11 (Wnt11), found in Mus musculus (Mouse).